The chain runs to 133 residues: Ribosome-binding factor A (133 aa).

It belongs to the RbfA family. As to quaternary structure, monomer. Binds 30S ribosomal subunits, but not 50S ribosomal subunits or 70S ribosomes.

It is found in the cytoplasm. Functionally, one of several proteins that assist in the late maturation steps of the functional core of the 30S ribosomal subunit. Associates with free 30S ribosomal subunits (but not with 30S subunits that are part of 70S ribosomes or polysomes). Required for efficient processing of 16S rRNA. May interact with the 5'-terminal helix region of 16S rRNA. This is Ribosome-binding factor A from Salmonella typhimurium (strain LT2 / SGSC1412 / ATCC 700720).